A 444-amino-acid polypeptide reads, in one-letter code: Glutamyl-tRNA reductase (444 aa).

Substrate contacts are provided by residues 49 to 52 (TCNR), serine 109, 114 to 116 (ETQ), and glutamine 120. The Nucleophile role is filled by cysteine 50. Residue 189 to 194 (GAGKMG) participates in NADP(+) binding.

Belongs to the glutamyl-tRNA reductase family. As to quaternary structure, homodimer.

The enzyme catalyses (S)-4-amino-5-oxopentanoate + tRNA(Glu) + NADP(+) = L-glutamyl-tRNA(Glu) + NADPH + H(+). Its pathway is porphyrin-containing compound metabolism; protoporphyrin-IX biosynthesis; 5-aminolevulinate from L-glutamyl-tRNA(Glu): step 1/2. Catalyzes the NADPH-dependent reduction of glutamyl-tRNA(Glu) to glutamate 1-semialdehyde (GSA). In Bacillus cereus (strain ATCC 10987 / NRS 248), this protein is Glutamyl-tRNA reductase.